A 527-amino-acid chain; its full sequence is Abrin-b (527 aa).

Gln-1 bears the Pyrrolidone carboxylic acid mark. Residue Asn-110 is glycosylated (N-linked (GlcNAc...) asparagine). The active site involves Glu-163. Disulfide bonds link Cys-246–Cys-268, Cys-285–Cys-304, and Cys-328–Cys-345. The Ricin B-type lectin 1 domain occupies 272-399; sequence YEPTVRIGGR…YLMRQGWRTG (128 aa). The stretch at 282–324 is one 1-alpha repeat; sequence NGMCVDVYDDGYHNGNRIIAWKCKDRLEENQLWTLKSDKTIRS. A 1-beta repeat occupies 325 to 365; it reads NGKCLTTEGYAPGNYVMIYDCTSAVAEATYWEIWDNGTIIN. 2 N-linked (GlcNAc...) asparagine glycosylation sites follow: Asn-360 and Asn-400. One copy of the 1-gamma repeat lies at 368–400; sequence SALVLSAESSSMGGTLTVQTNEYLMRQGWRTGN. A Ricin B-type lectin 2 domain is found at 402–526; that stretch reads TSPFVTSISG…GKPNQIWLTL (125 aa). One copy of the 2-alpha repeat lies at 413–448; that stretch reads SDLCMQAQGSNVWLAYCDNNKKEQQWALYTDGSIRS. 2 cysteine pairs are disulfide-bonded: Cys-416–Cys-429 and Cys-455–Cys-472. The stretch at 452–491 is one 2-beta repeat; it reads TNNCLTSKDHKQGSPIVLMACSNGWASQRWLFRNDGSIYN. The stretch at 494–527 is one 2-gamma repeat; that stretch reads DDMVMDVKRSDPSLKEIILHPYHGKPNQIWLTLF.

It in the N-terminal section; belongs to the ribosome-inactivating protein family. Type 2 RIP subfamily. Disulfide-linked dimer of A and B chains.

It carries out the reaction Endohydrolysis of the N-glycosidic bond at one specific adenosine on the 28S rRNA.. In terms of biological role, the A chain is responsible for inhibiting protein synthesis through the catalytic inactivation of 60S ribosomal subunits by removing adenine from position 4,324 of 28S rRNA. Abrin-a is more toxic than ricin. Functionally, the B chain is a galactose-specific lectin that facilitates the binding of abrin to the cell membrane that precedes endocytosis. This Abrus precatorius (Indian licorice) protein is Abrin-b.